Reading from the N-terminus, the 381-residue chain is Succinyl-diaminopimelate desuccinylase (381 aa).

H69 contributes to the Zn(2+) binding site. D71 is an active-site residue. Residue D103 coordinates Zn(2+). E137 serves as the catalytic Proton acceptor. Zn(2+) contacts are provided by E138, E166, and H355.

It belongs to the peptidase M20A family. DapE subfamily. In terms of assembly, homodimer. It depends on Zn(2+) as a cofactor. Requires Co(2+) as cofactor.

The enzyme catalyses N-succinyl-(2S,6S)-2,6-diaminopimelate + H2O = (2S,6S)-2,6-diaminopimelate + succinate. The protein operates within amino-acid biosynthesis; L-lysine biosynthesis via DAP pathway; LL-2,6-diaminopimelate from (S)-tetrahydrodipicolinate (succinylase route): step 3/3. Catalyzes the hydrolysis of N-succinyl-L,L-diaminopimelic acid (SDAP), forming succinate and LL-2,6-diaminopimelate (DAP), an intermediate involved in the bacterial biosynthesis of lysine and meso-diaminopimelic acid, an essential component of bacterial cell walls. The protein is Succinyl-diaminopimelate desuccinylase of Rickettsia massiliae (strain Mtu5).